Consider the following 460-residue polypeptide: NADH-ubiquinone oxidoreductase chain 4 (460 aa).

Transmembrane regions (helical) follow at residues 20–42 (PKWLWSTTTAHGLLIALISLTWL), 61–81 (PLSTPLLGLTCWLLPLMVLAS), 93–113 (QRLYITLLASLQTFLIMAFGA), 114–134 (TEIIMFYIMFEATLIPTLIII), 148–168 (TYFLFYTLAGSLPLLVALLLL), 195–215 (IWWAGCLIAFLVKMPLYGVHL), 225–245 (PVAGSMVLAAVLLKLGGYGMM), 258–278 (LAYPFIILALWGIIMTGSICL), 285–304 (SLIAYSSVSHMGLVAGGILI), 309–331 (GFTGAIILMIAHGLVSSALFCLA), 351–371 (MIFPLTAVWWFIANLANLALP), and 394–414 (IILTGTGTLITAGYSLYLFLM).

This sequence belongs to the complex I subunit 4 family.

The protein localises to the mitochondrion membrane. It catalyses the reaction a ubiquinone + NADH + 5 H(+)(in) = a ubiquinol + NAD(+) + 4 H(+)(out). In terms of biological role, core subunit of the mitochondrial membrane respiratory chain NADH dehydrogenase (Complex I) that is believed to belong to the minimal assembly required for catalysis. Complex I functions in the transfer of electrons from NADH to the respiratory chain. The immediate electron acceptor for the enzyme is believed to be ubiquinone. In Formosania lacustris (Oriental stream loach), this protein is NADH-ubiquinone oxidoreductase chain 4 (MT-ND4).